Reading from the N-terminus, the 344-residue chain is Dihydroorotase (344 aa).

Histidine 14 and histidine 16 together coordinate Zn(2+). Substrate-binding positions include 16-18 (HFR) and asparagine 42. Zn(2+)-binding residues include lysine 100, histidine 137, and histidine 175. N6-carboxylysine is present on lysine 100. Histidine 137 contacts substrate. Residue leucine 220 coordinates substrate. Aspartate 248 provides a ligand contact to Zn(2+). The active site involves aspartate 248. Substrate is bound by residues histidine 252 and alanine 264.

Belongs to the metallo-dependent hydrolases superfamily. DHOase family. Class II DHOase subfamily. Homodimer. The cofactor is Zn(2+).

The catalysed reaction is (S)-dihydroorotate + H2O = N-carbamoyl-L-aspartate + H(+). Its pathway is pyrimidine metabolism; UMP biosynthesis via de novo pathway; (S)-dihydroorotate from bicarbonate: step 3/3. Functionally, catalyzes the reversible cyclization of carbamoyl aspartate to dihydroorotate. In Erythrobacter litoralis (strain HTCC2594), this protein is Dihydroorotase.